Consider the following 100-residue polypeptide: NAD(P)H-quinone oxidoreductase subunit 4L, chloroplastic (100 aa).

3 helical membrane-spanning segments follow: residues 1 to 21 (MLEH…YGLI), 31 to 51 (MCLE…SDFF), and 60 to 80 (IFSI…PAIL).

It belongs to the complex I subunit 4L family. As to quaternary structure, NDH is composed of at least 16 different subunits, 5 of which are encoded in the nucleus.

The protein localises to the plastid. The protein resides in the chloroplast thylakoid membrane. It carries out the reaction a plastoquinone + NADH + (n+1) H(+)(in) = a plastoquinol + NAD(+) + n H(+)(out). The catalysed reaction is a plastoquinone + NADPH + (n+1) H(+)(in) = a plastoquinol + NADP(+) + n H(+)(out). Functionally, NDH shuttles electrons from NAD(P)H:plastoquinone, via FMN and iron-sulfur (Fe-S) centers, to quinones in the photosynthetic chain and possibly in a chloroplast respiratory chain. The immediate electron acceptor for the enzyme in this species is believed to be plastoquinone. Couples the redox reaction to proton translocation, and thus conserves the redox energy in a proton gradient. The polypeptide is NAD(P)H-quinone oxidoreductase subunit 4L, chloroplastic (Cucumis sativus (Cucumber)).